The primary structure comprises 229 residues: Type-5 uracil-DNA glycosylase (229 aa).

The [4Fe-4S] cluster site is built by C19, C22, C123, and C138.

The protein belongs to the uracil-DNA glycosylase (UDG) superfamily. Type 5 (UDGb) family.

Functionally, DNA glycosylase with broad substrate specificity. This Mycobacterium leprae (strain TN) protein is Type-5 uracil-DNA glycosylase.